Here is a 408-residue protein sequence, read N- to C-terminus: S100P-binding protein (408 aa).

Disordered regions lie at residues 1-111, 162-234, and 271-291; these read MMCS…AETP, KDET…SENP, and VSTS…MKGH. A compositionally biased stretch (acidic residues) spans 28-59; that stretch reads SLDEDGLDDSLLELSEGEEDDGDVNYTEEEID. Basic and acidic residues-rich tracts occupy residues 77 to 86 and 162 to 185; these read DGGHVEKGER and KDET…REDG. Ser-187 carries the phosphoserine modification. Residues 188–234 are compositionally biased toward polar residues; the sequence is PNESKLCTESEGISPNNSAWNGPQLSSSNNNFQQTVSDKNMPDSENP. Residues 280–291 show a composition bias toward basic and acidic residues; that stretch reads VLNKDSGKMKGH.

Interacts with S100P. In terms of tissue distribution, expressed in brain, spleen, and lung. Not detected in pancreas or liver. In pancreas, expressed predominantly in islet cells and to a lesser extent in acinar cells, but not expressed in ductal cells. Up-regulated in various pancreatic ductal adenocarcinomas and pancreatic intraepithelial neoplasias. Detected in pancreatic ductal adenocarcinoma cells (at protein level). Not detected in non-neoplastic ductal epithelium (at protein level).

The protein resides in the nucleus. The sequence is that of S100P-binding protein from Homo sapiens (Human).